Here is a 425-residue protein sequence, read N- to C-terminus: Arogenate dehydratase 5, chloroplastic (425 aa).

A chloroplast-targeting transit peptide spans 1-38; the sequence is MQTISPAFSCDLKSVIQPNLTAKKARYSHVNGKRVSVR. Residues 127-304 enclose the Prephenate dehydratase domain; it reads RVAYQGVPGA…NVTRFLMLAR (178 aa). An ACT domain is found at 320-411; that stretch reads VFAAQEHKGT…SFLRVLGSYP (92 aa).

In terms of tissue distribution, expressed in roots, leaves, stems, flowers and siliques. More abundant in stems and roots.

It localises to the plastid. The protein localises to the chloroplast stroma. It catalyses the reaction L-arogenate + H(+) = L-phenylalanine + CO2 + H2O. The protein operates within amino-acid biosynthesis; L-phenylalanine biosynthesis; L-phenylalanine from L-arogenate: step 1/1. Functionally, converts the prephenate produced from the shikimate-chorismate pathway into phenylalanine. The polypeptide is Arogenate dehydratase 5, chloroplastic (Arabidopsis thaliana (Mouse-ear cress)).